The primary structure comprises 327 residues: Urease accessory protein UreD (327 aa).

The protein belongs to the UreD family. In terms of assembly, ureD, UreF and UreG form a complex that acts as a GTP-hydrolysis-dependent molecular chaperone, activating the urease apoprotein by helping to assemble the nickel containing metallocenter of UreC. The UreE protein probably delivers the nickel.

The protein localises to the cytoplasm. Required for maturation of urease via the functional incorporation of the urease nickel metallocenter. This chain is Urease accessory protein UreD, found in Yersinia enterocolitica serotype O:8 / biotype 1B (strain NCTC 13174 / 8081).